Consider the following 517-residue polypeptide: ATP synthase subunit alpha (517 aa).

174 to 181 (GDRQTGKT) contributes to the ATP binding site.

It belongs to the ATPase alpha/beta chains family. As to quaternary structure, F-type ATPases have 2 components, CF(1) - the catalytic core - and CF(0) - the membrane proton channel. CF(1) has five subunits: alpha(3), beta(3), gamma(1), delta(1), epsilon(1). CF(0) has four main subunits: a(1), b(1), b'(1) and c(9-12).

Its subcellular location is the cell inner membrane. The enzyme catalyses ATP + H2O + 4 H(+)(in) = ADP + phosphate + 5 H(+)(out). Functionally, produces ATP from ADP in the presence of a proton gradient across the membrane. The alpha chain is a regulatory subunit. This is ATP synthase subunit alpha from Methylibium petroleiphilum (strain ATCC BAA-1232 / LMG 22953 / PM1).